A 395-amino-acid chain; its full sequence is 1-deoxy-D-xylulose 5-phosphate reductoisomerase (395 aa).

Residues Thr15, Gly16, Ser17, Ile18, Gly41, Asn43, and Asn126 each contribute to the NADPH site. 1-deoxy-D-xylulose 5-phosphate is bound at residue Lys127. Glu128 provides a ligand contact to NADPH. Asp152 lines the Mn(2+) pocket. Positions 153, 154, 178, and 201 each coordinate 1-deoxy-D-xylulose 5-phosphate. Glu154 contributes to the Mn(2+) binding site. An NADPH-binding site is contributed by Gly207. Ser214, Asn219, Lys220, and Glu223 together coordinate 1-deoxy-D-xylulose 5-phosphate. Residue Glu223 participates in Mn(2+) binding.

The protein belongs to the DXR family. Mg(2+) is required as a cofactor. The cofactor is Mn(2+).

The enzyme catalyses 2-C-methyl-D-erythritol 4-phosphate + NADP(+) = 1-deoxy-D-xylulose 5-phosphate + NADPH + H(+). It functions in the pathway isoprenoid biosynthesis; isopentenyl diphosphate biosynthesis via DXP pathway; isopentenyl diphosphate from 1-deoxy-D-xylulose 5-phosphate: step 1/6. Its function is as follows. Catalyzes the NADPH-dependent rearrangement and reduction of 1-deoxy-D-xylulose-5-phosphate (DXP) to 2-C-methyl-D-erythritol 4-phosphate (MEP). The chain is 1-deoxy-D-xylulose 5-phosphate reductoisomerase from Ruegeria pomeroyi (strain ATCC 700808 / DSM 15171 / DSS-3) (Silicibacter pomeroyi).